Reading from the N-terminus, the 307-residue chain is uncharacterized protein (307 aa).

This is an uncharacterized protein from Saccharum officinarum (Sugarcane).